A 288-amino-acid chain; its full sequence is Plasmodesmata-located protein 6 (288 aa).

Positions 1–22 (MFATKTVLFIAVVSLLGTFSSA) are cleaved as a signal peptide. The Extracellular portion of the chain corresponds to 23-256 (AVDTFIYGGC…NNDDDEIEKT (234 aa)). 2 consecutive Gnk2-homologous domains span residues 25-132 (DTFI…NTTF) and 137-234 (DKTV…ARGG). Cystine bridges form between C32–C110, C84–C95, C98–C123, C145–C212, C188–C197, and C200–C225. The helical transmembrane segment at 257–277 (LAIIVGLIAGVTLLVVFLSFM) threads the bilayer. Residues 257 to 277 (LAIIVGLIAGVTLLVVFLSFM) form a necessary and sufficient for plasmodesmal targeting region. Over 278-288 (AKSCERGKGGK) the chain is Cytoplasmic.

This sequence belongs to the cysteine-rich repeat secretory protein family. Plasmodesmata-located proteins (PDLD) subfamily. As to quaternary structure, (Microbial infection) Interacts with Grapevine fanleaf virus (GFLV) 2B-MP. As to expression, highly expressed in inflorescence silique (at mRNA level).

It is found in the cell membrane. The protein localises to the cell junction. The protein resides in the plasmodesma. Its function is as follows. Modulates cell-to-cell trafficking. The sequence is that of Plasmodesmata-located protein 6 from Arabidopsis thaliana (Mouse-ear cress).